Here is a 344-residue protein sequence, read N- to C-terminus: Uroporphyrinogen decarboxylase (344 aa).

Substrate-binding positions include 26 to 30 (RQAGR), phenylalanine 45, aspartate 75, tyrosine 151, serine 206, and histidine 320.

Belongs to the uroporphyrinogen decarboxylase family. Homodimer.

It localises to the cytoplasm. It catalyses the reaction uroporphyrinogen III + 4 H(+) = coproporphyrinogen III + 4 CO2. It participates in porphyrin-containing compound metabolism; protoporphyrin-IX biosynthesis; coproporphyrinogen-III from 5-aminolevulinate: step 4/4. Functionally, catalyzes the decarboxylation of four acetate groups of uroporphyrinogen-III to yield coproporphyrinogen-III. This chain is Uroporphyrinogen decarboxylase, found in Staphylococcus epidermidis (strain ATCC 35984 / DSM 28319 / BCRC 17069 / CCUG 31568 / BM 3577 / RP62A).